We begin with the raw amino-acid sequence, 315 residues long: Homoserine kinase (315 aa).

Residue 97 to 107 coordinates ATP; that stretch reads PPARGLGSSAT.

The protein belongs to the GHMP kinase family. Homoserine kinase subfamily.

The protein resides in the cytoplasm. It carries out the reaction L-homoserine + ATP = O-phospho-L-homoserine + ADP + H(+). Its pathway is amino-acid biosynthesis; L-threonine biosynthesis; L-threonine from L-aspartate: step 4/5. Its function is as follows. Catalyzes the ATP-dependent phosphorylation of L-homoserine to L-homoserine phosphate. The protein is Homoserine kinase of Prochlorococcus marinus subsp. pastoris (strain CCMP1986 / NIES-2087 / MED4).